The chain runs to 692 residues: Elongation factor G (692 aa).

The tr-type G domain occupies 8–283; that stretch reads EKVRNIGIAA…AVVDYLPAPT (276 aa). GTP is bound by residues 17-24, 81-85, and 135-138; these read AHIDAGKT, DTPGH, and NKMD.

It belongs to the TRAFAC class translation factor GTPase superfamily. Classic translation factor GTPase family. EF-G/EF-2 subfamily.

The protein localises to the cytoplasm. In terms of biological role, catalyzes the GTP-dependent ribosomal translocation step during translation elongation. During this step, the ribosome changes from the pre-translocational (PRE) to the post-translocational (POST) state as the newly formed A-site-bound peptidyl-tRNA and P-site-bound deacylated tRNA move to the P and E sites, respectively. Catalyzes the coordinated movement of the two tRNA molecules, the mRNA and conformational changes in the ribosome. The protein is Elongation factor G of Nitratiruptor sp. (strain SB155-2).